Here is an 892-residue protein sequence, read N- to C-terminus: Alpha-actinin-1 (892 aa).

Met-1 is modified (N-acetylmethionine). The interval 1–247 (MDHYDSQQTN…IMTYVSSFYH (247 aa)) is actin-binding. Position 6 is a phosphoserine (Ser-6). Tyr-12 carries the phosphotyrosine; by FAK1 modification. Calponin-homology (CH) domains lie at 31–135 (KQQR…LRFA) and 144–250 (TSAK…HAFS). 2 positions are modified to N6-acetyllysine: Lys-95 and Lys-195. Spectrin repeat units follow at residues 274-384 (QLME…WLLN), 394-499 (HLAE…ALER), 509-620 (QLYL…ALTE), and 630-733 (RLRK…EVEN). Residues 274–733 (QLMEDYEKLA…IARTINEVEN (460 aa)) are interaction with DDN. Ser-471 is subject to Phosphoserine. N6-acetyllysine is present on Lys-676. At Ser-677 the chain carries Phosphoserine. EF-hand domains are found at residues 746 to 781 (EQMN…LGYD) and 787 to 822 (QGEA…ETAD). The Ca(2+) site is built by Asp-759, Asp-761, Ser-763, Thr-765, and Glu-770. The residue at position 890 (Ser-890) is a Phosphoserine.

This sequence belongs to the alpha-actinin family. In terms of assembly, homodimer; antiparallel. Interacts with MYOZ2, TTID and LPP. Interacts with DDN. Interacts with PSD. Interacts with MICALL2. Interacts with DNM2 and CTTN. Interacts with PDLIM1. Interacts with PDLIM2. Interacts with PDLIM4 (via PDZ domain). Interacts with IGSF8.

Its subcellular location is the cytoplasm. It localises to the cytoskeleton. It is found in the myofibril. The protein localises to the sarcomere. The protein resides in the z line. Its subcellular location is the cell membrane. It localises to the cell junction. It is found in the cell projection. The protein localises to the ruffle. In terms of biological role, F-actin cross-linking protein which is thought to anchor actin to a variety of intracellular structures. Association with IGSF8 regulates the immune synapse formation and is required for efficient T-cell activation. The sequence is that of Alpha-actinin-1 (ACTN1) from Homo sapiens (Human).